Reading from the N-terminus, the 220-residue chain is Dual specificity phosphatase 29 (220 aa).

The 149-residue stretch at 54 to 202 (HVNEVWPKLY…LRELDKQLVQ (149 aa)) folds into the Tyrosine-protein phosphatase domain. Substrate is bound at residue 146–153 (HCVMGRSR). Cys-147 functions as the Phosphocysteine intermediate in the catalytic mechanism.

Belongs to the protein-tyrosine phosphatase family. Non-receptor class dual specificity subfamily. Homodimer. Interacts with PRKAA2.

The protein localises to the cytoplasm. It localises to the nucleus. It catalyses the reaction O-phospho-L-tyrosyl-[protein] + H2O = L-tyrosyl-[protein] + phosphate. The enzyme catalyses O-phospho-L-seryl-[protein] + H2O = L-seryl-[protein] + phosphate. It carries out the reaction O-phospho-L-threonyl-[protein] + H2O = L-threonyl-[protein] + phosphate. Functionally, dual specificity phosphatase able to dephosphorylate phosphotyrosine, phosphoserine and phosphothreonine residues within the same substrate, with a preference for phosphotyrosine as a substrate. Involved in the modulation of intracellular signaling cascades. In skeletal muscle regulates systemic glucose homeostasis by activating, AMPK, an energy sensor protein kinase. Affects MAP kinase signaling though modulation of the ERK1/2 cascade in skeletal muscle promoting muscle cell differentiation, development and atrophy. This Pan troglodytes (Chimpanzee) protein is Dual specificity phosphatase 29 (DUSP29).